Consider the following 89-residue polypeptide: CRISPR-associated endoribonuclease Cas2 2 (89 aa).

Position 9 (D9) interacts with Mg(2+).

The protein belongs to the CRISPR-associated endoribonuclease Cas2 protein family. As to quaternary structure, homodimer, forms a heterotetramer with a Cas1 homodimer. The cofactor is Mg(2+).

CRISPR (clustered regularly interspaced short palindromic repeat), is an adaptive immune system that provides protection against mobile genetic elements (viruses, transposable elements and conjugative plasmids). CRISPR clusters contain sequences complementary to antecedent mobile elements and target invading nucleic acids. CRISPR clusters are transcribed and processed into CRISPR RNA (crRNA). Functions as a ssRNA-specific endoribonuclease. Involved in the integration of spacer DNA into the CRISPR cassette. The chain is CRISPR-associated endoribonuclease Cas2 2 from Methanospirillum hungatei JF-1 (strain ATCC 27890 / DSM 864 / NBRC 100397 / JF-1).